Here is a 103-residue protein sequence, read N- to C-terminus: N(4)-acetylcytidine amidohydrolase (103 aa).

The 96-residue stretch at I6–K101 folds into the ASCH domain. The active-site Proton acceptor is the K21. T24 functions as the Nucleophile in the catalytic mechanism. E74 (proton donor) is an active-site residue.

This sequence belongs to the N(4)-acetylcytidine amidohydrolase family.

The catalysed reaction is N(4)-acetylcytidine + H2O = cytidine + acetate + H(+). The enzyme catalyses N(4)-acetyl-2'-deoxycytidine + H2O = 2'-deoxycytidine + acetate + H(+). It catalyses the reaction N(4)-acetylcytosine + H2O = cytosine + acetate + H(+). Functionally, catalyzes the hydrolysis of N(4)-acetylcytidine (ac4C). This is N(4)-acetylcytidine amidohydrolase (yqfB) from Escherichia coli (strain SE11).